We begin with the raw amino-acid sequence, 389 residues long: Elongation factor Tu-3 (389 aa).

One can recognise a tr-type G domain in the interval 10–203; that stretch reads KPHLNIGTMG…AVDTYVPMPE (194 aa). The segment at 19–26 is G1; sequence GHVDHGKT. Residue 19-26 participates in GTP binding; the sequence is GHVDHGKT. Thr-26 serves as a coordination point for Mg(2+). A G2 region spans residues 60-64; sequence GITIN. The G3 stretch occupies residues 81–84; that stretch reads DMPG. GTP-binding positions include 81-85 and 136-139; these read DMPGH and NKAD. Residues 136 to 139 are G4; the sequence is NKAD. Positions 173 to 175 are G5; that stretch reads SGL.

Belongs to the TRAFAC class translation factor GTPase superfamily. Classic translation factor GTPase family. EF-Tu/EF-1A subfamily. Monomer.

The protein resides in the cytoplasm. The catalysed reaction is GTP + H2O = GDP + phosphate + H(+). Functionally, GTP hydrolase that promotes the GTP-dependent binding of aminoacyl-tRNA to the A-site of ribosomes during protein biosynthesis. This Streptomyces ramocissimus protein is Elongation factor Tu-3.